The following is a 141-amino-acid chain: Auxin-responsive protein SAUR63 (141 aa).

This sequence belongs to the ARG7 family. In terms of tissue distribution, expressed in hypocotyls, cotyledons, petioles, young rosette leaves, apical portion of inflorescence stems, stamen filaments and petals.

The protein localises to the cell membrane. May promote auxin-stimulated organ elongation, such as hypocotyls, stamen filaments and petals. This Arabidopsis thaliana (Mouse-ear cress) protein is Auxin-responsive protein SAUR63.